A 285-amino-acid polypeptide reads, in one-letter code: Tyrosine recombinase XerA (285 aa).

The 78-residue stretch at 7 to 84 folds into the Core-binding (CB) domain; it reads IVNSDILEEF…ALKSYFKFEG (78 aa). The 175-residue stretch at 100-274 folds into the Tyr recombinase domain; that stretch reads SLPKSLTEDE…TTKHLREAIE (175 aa). Active-site residues include Arg-135, Lys-160, His-226, Arg-229, and His-252. Tyr-261 (O-(3'-phospho-DNA)-tyrosine intermediate) is an active-site residue.

Belongs to the 'phage' integrase family. XerA subfamily.

The protein resides in the cytoplasm. Its function is as follows. Site-specific tyrosine recombinase, which acts by catalyzing the cutting and rejoining of the recombining DNA molecules. This chain is Tyrosine recombinase XerA, found in Pyrococcus horikoshii (strain ATCC 700860 / DSM 12428 / JCM 9974 / NBRC 100139 / OT-3).